The sequence spans 343 residues: Dihydroorotase (343 aa).

Residues His-13 and His-15 each coordinate Zn(2+). Substrate is bound by residues 15–17 (HLR) and Asn-41. Lys-99, His-136, and His-174 together coordinate Zn(2+). Lys-99 is modified (N6-carboxylysine). His-136 is a binding site for substrate. Substrate is bound at residue Leu-219. Asp-247 is a Zn(2+) binding site. Asp-247 is a catalytic residue. Positions 251 and 263 each coordinate substrate.

Belongs to the metallo-dependent hydrolases superfamily. DHOase family. Class II DHOase subfamily. In terms of assembly, homodimer. It depends on Zn(2+) as a cofactor.

The enzyme catalyses (S)-dihydroorotate + H2O = N-carbamoyl-L-aspartate + H(+). Its pathway is pyrimidine metabolism; UMP biosynthesis via de novo pathway; (S)-dihydroorotate from bicarbonate: step 3/3. Functionally, catalyzes the reversible cyclization of carbamoyl aspartate to dihydroorotate. This is Dihydroorotase from Shewanella sp. (strain ANA-3).